The chain runs to 284 residues: RAD52 motif-containing protein 1 (284 aa).

A necessary for nuclear localization and for nucleolar accumulation in response to heat shock region spans residues 1 to 92 (MAELVPFAVP…KQLFQKSPVK (92 aa)). The RRM domain maps to 15–98 (KTLLVWELSS…SPVKVRLGTR (84 aa)). A necessary for nuclear and nucleolar localization region spans residues 90-133 (PVKVRLGTRHKAVQHQALALNSSKCQELANYYFGFNGCSKRIIK).

As to quaternary structure, homodimer. As to expression, expressed in testis.

It localises to the nucleus. The protein resides in the cytoplasm. The protein localises to the nucleolus. Its subcellular location is the PML body. It is found in the cajal body. Functionally, may confer resistance to the antitumor agent cisplatin. Binds to DNA and RNA. The sequence is that of RAD52 motif-containing protein 1 (RDM1) from Homo sapiens (Human).